We begin with the raw amino-acid sequence, 93 residues long: U12-lycotoxin-Ls1b (93 aa).

The first 18 residues, 1 to 18 (MKFAVILLFSLVVLAVAS), serve as a signal peptide directing secretion. The propeptide occupies 19–38 (ESVEEVRREIDIEDLPEQQR).

Belongs to the neurotoxin 31 family. Contains 5 disulfide bonds. Expressed by the venom gland.

The protein resides in the secreted. This chain is U12-lycotoxin-Ls1b, found in Lycosa singoriensis (Wolf spider).